Here is a 334-residue protein sequence, read N- to C-terminus: MTENSDKVPIALVGPDDVEFCSPPAYATLTVKPSSPARLLKVGAVVLISGAVLLLFGAIGAFYFWKGSDSHIYNVHYTMSINGKLQDGSMEIDAGNNLETFKMGSGAEEAIAVNDFQNGITGIRFAGGEKCYIKAQVKARIPEVGAVTKQSISSKLEGKIMPVKYEENSLIWVAVDQPVKDNSFLSSKVLELCGDLPIFWLKPTYPKEIQRERREVVRKIVPTTTKRPHSGPRSNPGAGRLNNETRPSVQEDSQAFNPDNPYHQQEGESMTFDPRLDHEGICCIECRRSYTHCQKICEPLGGYYPWPYNYQGCRSACRVIMPCSWWVARILGMV.

The chain crosses the membrane as a helical span at residues 45–65 (VVLISGAVLLLFGAIGAFYFW). The BRICHOS domain occupies 104–201 (GSGAEEAIAV…LCGDLPIFWL (98 aa)). An intrachain disulfide couples Cys-131 to Cys-193. Residues 211–214 (RERR) constitute a propeptide that is removed on maturation. Positions 218–268 (RKIVPTTTKRPHSGPRSNPGAGRLNNETRPSVQEDSQAFNPDNPYHQQEGE) are disordered. The segment covering 242–257 (NNETRPSVQEDSQAFN) has biased composition (polar residues). The N-linked (GlcNAc...) asparagine glycan is linked to Asn-243. Cystine bridges form between Cys-282–Cys-286, Cys-283–Cys-323, Cys-293–Cys-317, and Cys-297–Cys-313.

The protein belongs to the chondromodulin-1 family. After cleavage, the post-translationally modified ChM-I is secreted as a glycoprotein. Detected in cartilage and cardiac valves (at protein level). Detected in the laminae fibrosa, spongiosa and ventricularis layers of normal cardiac valves (at protein level). Expression is decreased cardiac valves of patients with valvular heart disease (at protein level). Weakly expressed in chondrosarcoma.

It localises to the secreted. It is found in the extracellular space. The protein resides in the extracellular matrix. Its subcellular location is the endomembrane system. Its function is as follows. Bifunctional growth regulator that stimulates the growth of cultured chondrocytes in the presence of basic fibroblast growth factor (FGF) but inhibits the growth of cultured vascular endothelial cells. May contribute to the rapid growth of cartilage and vascular invasion prior to the replacement of cartilage by bone during endochondral bone development. Inhibits in vitro tube formation and mobilization of endothelial cells. Plays a role as antiangiogenic factor in cardiac valves to suppress neovascularization. This is Leukocyte cell-derived chemotaxin 1 from Homo sapiens (Human).